A 296-amino-acid chain; its full sequence is Glycine--tRNA ligase alpha subunit (296 aa).

It belongs to the class-II aminoacyl-tRNA synthetase family. As to quaternary structure, tetramer of two alpha and two beta subunits.

The protein resides in the cytoplasm. The enzyme catalyses tRNA(Gly) + glycine + ATP = glycyl-tRNA(Gly) + AMP + diphosphate. This chain is Glycine--tRNA ligase alpha subunit, found in Listeria welshimeri serovar 6b (strain ATCC 35897 / DSM 20650 / CCUG 15529 / CIP 8149 / NCTC 11857 / SLCC 5334 / V8).